A 453-amino-acid chain; its full sequence is MAALSKSIPHSCYEIGHTWNPSCFGSYLQITQGAMEESFKIYAPLYLVAAILRRKNLDYYVHKLLPELLQSTSFLTANGSLYIAFFCILRKLLGRFYFWTPGFGAALPASYAAILIERKSRRGLLTIYMANQATEALFRMGVTRGYIKPIRHGEVLLFCITSALYMFFFRCRDGLKGFAFSALKFIVGKEEIPAHALLPENMYVKAEQKSKEHRGLSRNSLKRLMDIICKHGPRHRCCKHYEDNCISYCIKGFIRMFSIGYLIQCCLRIPSTFRHLFTKPSRLLSLFYNKENFQLGAFLGSFVSIYKGTSCFLRWVRNLDDELHALVAGFLAGISMMFYKSTTISMYLASKLVETMYFKGIEAGKCPYFPHADSVIYAVSTAVCFHAAVMEVQNLRPSYWKFLQRLTKGRFALMNRKALDVFDSEASKNFNNFVPKLDPRFCIVKPELPLDFS.

A run of 5 helical transmembrane segments spans residues 68 to 88, 96 to 116, 149 to 169, 293 to 313, and 326 to 346; these read LLQS…FFCI, FYFW…AILI, PIRH…MFFF, FQLG…SCFL, and LVAG…TISM.

It belongs to the TMEM135 family.

The protein resides in the mitochondrion membrane. The protein localises to the peroxisome membrane. Functionally, involved in mitochondrial metabolism by regulating the balance between mitochondrial fusion and fission. May act as a regulator of mitochondrial fission that promotes DNM1L-dependent fission through activation of DNM1L. May be involved in peroxisome organization. The protein is Transmembrane protein 135 (tmem135) of Xenopus laevis (African clawed frog).